The chain runs to 255 residues: Type III pantothenate kinase (255 aa).

An ATP-binding site is contributed by 6–13 (DIGNTNIK). 107-110 (GADR) contacts substrate. The Proton acceptor role is filled by aspartate 109. Residue threonine 132 participates in ATP binding. A substrate-binding site is contributed by threonine 184.

It belongs to the type III pantothenate kinase family. In terms of assembly, homodimer. The cofactor is NH4(+). K(+) serves as cofactor.

It is found in the cytoplasm. It carries out the reaction (R)-pantothenate + ATP = (R)-4'-phosphopantothenate + ADP + H(+). The protein operates within cofactor biosynthesis; coenzyme A biosynthesis; CoA from (R)-pantothenate: step 1/5. Its function is as follows. Catalyzes the phosphorylation of pantothenate (Pan), the first step in CoA biosynthesis. The sequence is that of Type III pantothenate kinase from Roseiflexus castenholzii (strain DSM 13941 / HLO8).